Here is a 65-residue protein sequence, read N- to C-terminus: Large ribosomal subunit protein bL35 (65 aa).

The protein belongs to the bacterial ribosomal protein bL35 family.

The chain is Large ribosomal subunit protein bL35 from Enterobacter sp. (strain 638).